We begin with the raw amino-acid sequence, 56 residues long: Keratin-associated protein 20-1 (56 aa).

Belongs to the KRTAP type 20 family. Interacts with hair keratins.

Its function is as follows. In the hair cortex, hair keratin intermediate filaments are embedded in an interfilamentous matrix, consisting of hair keratin-associated proteins (KRTAP), which are essential for the formation of a rigid and resistant hair shaft through their extensive disulfide bond cross-linking with abundant cysteine residues of hair keratins. The matrix proteins include the high-sulfur and high-glycine-tyrosine keratins. The protein is Keratin-associated protein 20-1 (KRTAP20-1) of Homo sapiens (Human).